A 123-amino-acid chain; its full sequence is Gamma-synuclein (123 aa).

2 consecutive repeat copies span residues 20 to 30 and 31 to 41. Residues 20–67 form a 4 X 11 AA tandem repeats of [EGSA]-K-T-K-[EQ]-[GQ]-V-X(4) region; sequence EKTKQGVTEAAEKTKEGVMYVGTKTKGERGTSVTSVAEKTKEQANAVS. The stretch at 42-56 is one 3; approximate repeat; it reads TKTKGERGTSVTSVA. The stretch at 57 to 67 is repeat 4; it reads EKTKEQANAVS. Residues Ser-67 and Ser-72 each carry the phosphoserine modification. The disordered stretch occupies residues 93 to 123; the sequence is GVVRKEDLEPPAQDQEAKEQEEGEEAKSGGD. A compositionally biased stretch (basic and acidic residues) spans 107-123; sequence QEAKEQEEGEEAKSGGD. The residue at position 120 (Ser-120) is a Phosphoserine; by BARK1, CaMK2 and CK2.

It belongs to the synuclein family. May be a centrosome-associated protein. Interacts with MYOC; affects its secretion and its aggregation. In terms of processing, phosphorylated. Phosphorylation by GRK5 appears to occur on residues distinct from the residue phosphorylated by other kinases. In terms of tissue distribution, specifically expressed in the peripheral nervous system. High expression in motoneurons of the brainstem. Also found in neurons of many other brain regions including the cerebellar cortex, thalamus, hypothalamus and CA1, CA2, CA3 and CA4 regions of the hippocampus.

It is found in the cytoplasm. Its subcellular location is the perinuclear region. The protein resides in the cytoskeleton. It localises to the microtubule organizing center. The protein localises to the centrosome. It is found in the spindle. In terms of biological role, plays a role in neurofilament network integrity. May be involved in modulating axonal architecture during development and in the adult. In vitro, increases the susceptibility of neurofilament-H to calcium-dependent proteases. May also function in modulating the keratin network in skin. Activates the MAPK and Elk-1 signal transduction pathway. In Rattus norvegicus (Rat), this protein is Gamma-synuclein (Sncg).